Here is a 426-residue protein sequence, read N- to C-terminus: Serine hydroxymethyltransferase (426 aa).

Residues Leu-115 and 119–121 (GHI) each bind (6S)-5,6,7,8-tetrahydrofolate. Residue Lys-225 is modified to N6-(pyridoxal phosphate)lysine.

This sequence belongs to the SHMT family. Homodimer. It depends on pyridoxal 5'-phosphate as a cofactor.

Its subcellular location is the cytoplasm. The protein operates within amino-acid biosynthesis; glycine biosynthesis; glycine from L-serine: step 1/1. Catalyzes the reversible interconversion of serine and glycine with a modified folate serving as the one-carbon carrier. Also exhibits a pteridine-independent aldolase activity toward beta-hydroxyamino acids, producing glycine and aldehydes, via a retro-aldol mechanism. This is Serine hydroxymethyltransferase from Thermoplasma acidophilum (strain ATCC 25905 / DSM 1728 / JCM 9062 / NBRC 15155 / AMRC-C165).